Reading from the N-terminus, the 582-residue chain is Two-component response regulator ORR26 (582 aa).

The Response regulatory domain maps to 11-126 (RVLVVDDDPT…ELRNIWQHVY (116 aa)). Asp62 carries the 4-aspartylphosphate modification. Basic and acidic residues predominate over residues 166 to 182 (SDTMRKRKDVDKDHADQ). The tract at residues 166–187 (SDTMRKRKDVDKDHADQESSDG) is disordered. Residues 189–248 (TVKKARVVWSVDLHQKFVNAVNQIGFDKVGPKKILDLMNVPGLTRENVASHLQKYRLYLS) constitute a DNA-binding region (myb-like GARP).

It belongs to the ARR family. Type-B subfamily. Post-translationally, two-component system major event consists of a His-to-Asp phosphorelay between a sensor histidine kinase (HK) and a response regulator (RR). In plants, the His-to-Asp phosphorelay involves an additional intermediate named Histidine-containing phosphotransfer protein (HPt). This multistep phosphorelay consists of a His-Asp-His-Asp sequential transfer of a phosphate group between first a His and an Asp of the HK protein, followed by the transfer to a conserved His of the HPt protein and finally the transfer to an Asp in the receiver domain of the RR protein.

It localises to the nucleus. Its function is as follows. Transcriptional activator that binds specific DNA sequence. Functions as a response regulator involved in His-to-Asp phosphorelay signal transduction system. Phosphorylation of the Asp residue in the receiver domain activates the ability of the protein to promote the transcription of target genes. May directly activate some type-A response regulators in response to cytokinins. The chain is Two-component response regulator ORR26 from Oryza sativa subsp. japonica (Rice).